Reading from the N-terminus, the 122-residue chain is Large ribosomal subunit protein uL14 (122 aa).

This sequence belongs to the universal ribosomal protein uL14 family. In terms of assembly, part of the 50S ribosomal subunit. Forms a cluster with proteins L3 and L19. In the 70S ribosome, L14 and L19 interact and together make contacts with the 16S rRNA in bridges B5 and B8.

In terms of biological role, binds to 23S rRNA. Forms part of two intersubunit bridges in the 70S ribosome. This is Large ribosomal subunit protein uL14 from Mycolicibacterium vanbaalenii (strain DSM 7251 / JCM 13017 / BCRC 16820 / KCTC 9966 / NRRL B-24157 / PYR-1) (Mycobacterium vanbaalenii).